Consider the following 495-residue polypeptide: Leucine aminopeptidase 2 (495 aa).

An N-terminal signal peptide occupies residues 1–21 (MKTQLLSLGVALTAISQGVIA). Residues 124–218 (PPADKITAEL…ADGKNLASLV (95 aa)) enclose the PA domain. N-linked (GlcNAc...) asparagine glycosylation is found at N142 and N235. The Zn(2+) site is built by H259 and D271. A glycan (N-linked (GlcNAc...) asparagine) is linked at N272. The active-site Proton acceptor is E303. Residues E304 and D332 each coordinate Zn(2+). N352 carries an N-linked (GlcNAc...) asparagine glycan. Residue H430 participates in Zn(2+) binding. The interval 464 to 495 (GFPTRPKTGKRDVSPRGQSMPGGGCGHHSVFM) is disordered.

This sequence belongs to the peptidase M28 family. M28A subfamily. In terms of assembly, monomer. The cofactor is Zn(2+).

Its subcellular location is the secreted. Its function is as follows. Extracellular aminopeptidase that releases a wide variety of amino acids from natural peptides and contributes to pathogenicity. The protein is Leucine aminopeptidase 2 (LAP2) of Arthroderma otae (strain ATCC MYA-4605 / CBS 113480) (Microsporum canis).